Here is a 473-residue protein sequence, read N- to C-terminus: Siroheme synthase (473 aa).

The segment at 1 to 203 (MQYLPIFTKL…GDTQAAEQQL (203 aa)) is precorrin-2 dehydrogenase /sirohydrochlorin ferrochelatase. Residues 22 to 23 (DV) and 43 to 44 (PK) contribute to the NAD(+) site. The residue at position 128 (Ser-128) is a Phosphoserine. The interval 215 to 473 (GEVYVVGAGP…SFAQPLTDVA (259 aa)) is uroporphyrinogen-III C-methyltransferase. Position 224 (Pro-224) interacts with S-adenosyl-L-methionine. The active-site Proton acceptor is the Asp-247. Lys-269 serves as the catalytic Proton donor. S-adenosyl-L-methionine-binding positions include 300–302 (GGD), Ile-305, 330–331 (TA), Met-382, and Gly-411.

The protein in the N-terminal section; belongs to the precorrin-2 dehydrogenase / sirohydrochlorin ferrochelatase family. In the C-terminal section; belongs to the precorrin methyltransferase family.

It catalyses the reaction uroporphyrinogen III + 2 S-adenosyl-L-methionine = precorrin-2 + 2 S-adenosyl-L-homocysteine + H(+). The catalysed reaction is precorrin-2 + NAD(+) = sirohydrochlorin + NADH + 2 H(+). The enzyme catalyses siroheme + 2 H(+) = sirohydrochlorin + Fe(2+). It participates in cofactor biosynthesis; adenosylcobalamin biosynthesis; precorrin-2 from uroporphyrinogen III: step 1/1. The protein operates within cofactor biosynthesis; adenosylcobalamin biosynthesis; sirohydrochlorin from precorrin-2: step 1/1. Its pathway is porphyrin-containing compound metabolism; siroheme biosynthesis; precorrin-2 from uroporphyrinogen III: step 1/1. It functions in the pathway porphyrin-containing compound metabolism; siroheme biosynthesis; siroheme from sirohydrochlorin: step 1/1. It participates in porphyrin-containing compound metabolism; siroheme biosynthesis; sirohydrochlorin from precorrin-2: step 1/1. Multifunctional enzyme that catalyzes the SAM-dependent methylations of uroporphyrinogen III at position C-2 and C-7 to form precorrin-2 via precorrin-1. Then it catalyzes the NAD-dependent ring dehydrogenation of precorrin-2 to yield sirohydrochlorin. Finally, it catalyzes the ferrochelation of sirohydrochlorin to yield siroheme. This Pseudoalteromonas translucida (strain TAC 125) protein is Siroheme synthase.